Reading from the N-terminus, the 198-residue chain is Probable GTP-binding protein EngB (198 aa).

Residues 21–195 (NFSEVAFLGR…EDIIINQTLG (175 aa)) enclose the EngB-type G domain. GTP-binding positions include 29 to 36 (GRSNVGKS), 56 to 60 (GKTQL), 81 to 84 (DLPG), 151 to 154 (TKCD), and 174 to 176 (VSN). Mg(2+)-binding residues include Ser36 and Thr58.

Belongs to the TRAFAC class TrmE-Era-EngA-EngB-Septin-like GTPase superfamily. EngB GTPase family. The cofactor is Mg(2+).

In terms of biological role, necessary for normal cell division and for the maintenance of normal septation. In Campylobacter jejuni (strain RM1221), this protein is Probable GTP-binding protein EngB.